We begin with the raw amino-acid sequence, 148 residues long: Snaclec B1 (148 aa).

A signal peptide spans 1–24 (MGRIIFVSFGLLVVFLSLSGTGAA). Intrachain disulfides connect cysteine 27–cysteine 38, cysteine 55–cysteine 144, and cysteine 121–cysteine 136. Residues 34 to 145 (YDQHCYKVFD…CRLLGHFVCK (112 aa)) form the C-type lectin domain.

It belongs to the snaclec family. Heterodimer; disulfide-linked. Expressed by the venom gland.

It is found in the secreted. Its function is as follows. Interferes with one step of hemostasis (modulation of platelet aggregation, or coagulation cascade, for example). In Macrovipera lebetinus (Levantine viper), this protein is Snaclec B1.